A 354-amino-acid chain; its full sequence is UDP-3-O-acylglucosamine N-acyltransferase (354 aa).

His258 serves as the catalytic Proton acceptor.

It belongs to the transferase hexapeptide repeat family. LpxD subfamily. Homotrimer.

It carries out the reaction a UDP-3-O-[(3R)-3-hydroxyacyl]-alpha-D-glucosamine + a (3R)-hydroxyacyl-[ACP] = a UDP-2-N,3-O-bis[(3R)-3-hydroxyacyl]-alpha-D-glucosamine + holo-[ACP] + H(+). It participates in bacterial outer membrane biogenesis; LPS lipid A biosynthesis. Its function is as follows. Catalyzes the N-acylation of UDP-3-O-acylglucosamine using 3-hydroxyacyl-ACP as the acyl donor. Is involved in the biosynthesis of lipid A, a phosphorylated glycolipid that anchors the lipopolysaccharide to the outer membrane of the cell. The polypeptide is UDP-3-O-acylglucosamine N-acyltransferase (Rhizobium meliloti (strain 1021) (Ensifer meliloti)).